Consider the following 255-residue polypeptide: Ribonuclease HII (255 aa).

In terms of domain architecture, RNase H type-2 spans 72–255 (RLIAGVDEVG…KTFAPVQSFR (184 aa)). A divalent metal cation contacts are provided by aspartate 78, glutamate 79, and aspartate 170.

It belongs to the RNase HII family. The cofactor is Mn(2+). It depends on Mg(2+) as a cofactor.

Its subcellular location is the cytoplasm. The catalysed reaction is Endonucleolytic cleavage to 5'-phosphomonoester.. Its function is as follows. Endonuclease that specifically degrades the RNA of RNA-DNA hybrids. The sequence is that of Ribonuclease HII (rnhB) from Bacillus subtilis (strain 168).